The primary structure comprises 275 residues: MANPTVIKLQDGNVMPQLGLGVWQASNEEVITAIQKALEVGYRSFDTAAAYKNEEGVGKALKNASVNREELFITTKLWNDDHNRPREALLDSLKKLQLDYIDLYLMHWPVPAIDHYVEAWKGMIELQKEGLIKSIGVCNFQIHHLQRLIDETGVTPVINQIELHPLMQQRQLHAWNATHKIQTESWSPLAQGGKGVFDQKVIRDLADKYGKTPAQIVIRWHLDSGLVVIPKSVTPSRIAENFDVWDFRLDKDELGEIAKLDQGKRLGPDPDQFGG.

The Proton donor role is filled by Tyr51. Substrate is bound at residue His107. 187–241 (SPLAQGGKGVFDQKVIRDLADKYGKTPAQIVIRWHLDSGLVVIPKSVTPSRIAEN) contributes to the NADP(+) binding site.

Belongs to the aldo/keto reductase family. As to quaternary structure, monomer.

Its subcellular location is the cytoplasm. It carries out the reaction hydroxyacetone + NADP(+) = methylglyoxal + NADPH + H(+). Its function is as follows. Aldo-keto reductase that significantly contributes to cellular methylglyoxal detoxification by catalyzing the NADPH-dependent conversion of methylglyoxal to acetol. The polypeptide is Methylglyoxal reductase DkgA (Escherichia coli O157:H7).